A 395-amino-acid polypeptide reads, in one-letter code: RNA polymerase II elongation factor ELL3 (395 aa).

Disordered stretches follow at residues 129–177 (LTEG…SEPM) and 189–281 (PSRE…SPEE). S242 is subject to Phosphoserine. The span at 243 to 260 (QEGEDWGQDEDEEGDEDG) shows a compositional bias: acidic residues. Residues 269-279 (SAPSASESPSP) are compositionally biased toward low complexity. Residues 283–393 (PDYLLQYRAI…LILEFEEKNR (111 aa)) enclose the OCEL domain.

The protein belongs to the ELL/occludin family. Component of the little elongation complex (LEC), at least composed of ELL (ELL, ELL2 or ELL3), ZC3H8, ICE1 and ICE2. Component of the super elongation complex (SEC), at least composed of EAF1, EAF2, CDK9, MLLT3/AF9, AFF (AFF1 or AFF4), the P-TEFb complex and ELL (ELL, ELL2 or ELL3). Interacts with AFF4. As to expression, actively expressed in embryonic stem cells (ES cells), while it is weakly expressed in differentiated cells.

The protein localises to the nucleus. Functionally, enhancer-binding elongation factor that specifically binds enhancers in embryonic stem cells (ES cells), marks them, and is required for their future activation during stem cell specification. Elongation factor component of the super elongation complex (SEC), a complex required to increase the catalytic rate of RNA polymerase II transcription by suppressing transient pausing by the polymerase at multiple sites along the DNA. Component of the little elongation complex (LEC), a complex required to regulate small nuclear RNA (snRNA) gene transcription by RNA polymerase II and III. Does not only bind to enhancer regions of active genes, but also marks the enhancers that are in a poised or inactive state in ES cells and is required for establishing proper RNA polymerase II occupancy at developmentally regulated genes in a cohesin-dependent manner. Probably required for priming developmentally regulated genes for later recruitment of the super elongation complex (SEC), for transcriptional activation during differentiation. Required for recruitment of P-TEFb within SEC during differentiation. Probably preloaded on germ cell chromatin, suggesting that it may prime gene activation by marking enhancers as early as in the germ cells. Promoting epithelial-mesenchymal transition (EMT). The chain is RNA polymerase II elongation factor ELL3 (Ell3) from Mus musculus (Mouse).